The sequence spans 129 residues: MLNEFKQFIMRGNAIDLAVGVVMGAAFTSIVKSIVTNLIGPIIGIFAGAVDLSSLKFSIGPAVFKYGAVLNQVINFIIVGFIIFLIIKAINKFFKKNEKKEDAEAESEVKLLTDIRAELKKSNQSTNKA.

3 helical membrane passes run Phe-8–Thr-28, Ile-30–Val-50, and Gly-67–Ile-87.

The protein belongs to the MscL family. As to quaternary structure, homopentamer.

It is found in the cell membrane. Its function is as follows. Channel that opens in response to stretch forces in the membrane lipid bilayer. May participate in the regulation of osmotic pressure changes within the cell. In Oenococcus oeni (strain ATCC BAA-331 / PSU-1), this protein is Large-conductance mechanosensitive channel.